Reading from the N-terminus, the 107-residue chain is MKPDITFYRRFQADILAGRKTITIRDDSESHFQPGQRLMVGQYEDGRPFCEIEVIGVTPVMLAQLNAQHAAQENMTLDALRSVIGEIYPQIERLYVISFSLVRALAG.

Positions T6–V102 constitute an ASCH domain. The Proton acceptor role is filled by K20. T23 acts as the Nucleophile in catalysis. Catalysis depends on E73, which acts as the Proton donor.

The protein belongs to the N(4)-acetylcytidine amidohydrolase family.

It carries out the reaction N(4)-acetylcytidine + H2O = cytidine + acetate + H(+). The enzyme catalyses N(4)-acetyl-2'-deoxycytidine + H2O = 2'-deoxycytidine + acetate + H(+). The catalysed reaction is N(4)-acetylcytosine + H2O = cytosine + acetate + H(+). Its function is as follows. Catalyzes the hydrolysis of N(4)-acetylcytidine (ac4C). The protein is N(4)-acetylcytidine amidohydrolase of Edwardsiella ictaluri (strain 93-146).